Consider the following 394-residue polypeptide: Flavohemoprotein (394 aa).

The 136-residue stretch at 1 to 136 (MLSENTINIV…LANVFIQREE (136 aa)) folds into the Globin domain. His85 is a binding site for heme b. Residues Tyr95 and Glu135 each act as charge relay system in the active site. Residues 147–394 (GGWRGLREFE…YECFGPHKVV (248 aa)) form a reductase region. The FAD-binding FR-type domain occupies 150-255 (RGLREFELVE…AAPAGDFFLD (106 aa)). Residues Tyr188 and 204–207 (RQYS) contribute to the FAD site. Residue 268–273 (GVGLTP) participates in NADP(+) binding. 387 to 390 (CFGP) contacts FAD.

Belongs to the globin family. Two-domain flavohemoproteins subfamily. The protein in the C-terminal section; belongs to the flavoprotein pyridine nucleotide cytochrome reductase family. Requires heme b as cofactor. FAD serves as cofactor.

The catalysed reaction is 2 nitric oxide + NADPH + 2 O2 = 2 nitrate + NADP(+) + H(+). It carries out the reaction 2 nitric oxide + NADH + 2 O2 = 2 nitrate + NAD(+) + H(+). Its function is as follows. Is involved in NO detoxification in an aerobic process, termed nitric oxide dioxygenase (NOD) reaction that utilizes O(2) and NAD(P)H to convert NO to nitrate, which protects the bacterium from various noxious nitrogen compounds. Therefore, plays a central role in the inducible response to nitrosative stress. This chain is Flavohemoprotein, found in Vibrio vulnificus (strain CMCP6).